Consider the following 536-residue polypeptide: Chaperonin GroEL (536 aa).

ATP contacts are provided by residues 29–32 (TLGP), 86–90 (DGTTT), Gly-413, and Asp-494.

The protein belongs to the chaperonin (HSP60) family. Forms a cylinder of 14 subunits composed of two heptameric rings stacked back-to-back. Interacts with the co-chaperonin GroES.

The protein resides in the cytoplasm. The catalysed reaction is ATP + H2O + a folded polypeptide = ADP + phosphate + an unfolded polypeptide.. Functionally, together with its co-chaperonin GroES, plays an essential role in assisting protein folding. The GroEL-GroES system forms a nano-cage that allows encapsulation of the non-native substrate proteins and provides a physical environment optimized to promote and accelerate protein folding. The polypeptide is Chaperonin GroEL (Acholeplasma laidlawii (strain PG-8A)).